The chain runs to 661 residues: Probable potassium transport system protein Kup 1 (661 aa).

Residues 1-11 (MKGLFPAGGGN) show a composition bias toward gly residues. The disordered stretch occupies residues 1–38 (MKGLFPAGGGNPPSSYLSRFLPHRKERSPENVTSGRNG). 12 helical membrane passes run 48–68 (LALG…LYTI), 85–105 (IMGV…IKYI), 139–159 (AVVV…GFIT), 177–197 (AAKN…FLVQ), 207–227 (IFGP…LLCI), 251–271 (VHGL…EALY), 286–306 (WFAM…AALL), 324–344 (LLLP…QAMI), 384–404 (LMMV…GLAG), 405–425 (AYGV…FFVA), 436–456 (TAPL…SNLL), and 458–478 (FFDG…VMAS).

Belongs to the HAK/KUP transporter (TC 2.A.72) family.

Its subcellular location is the cell inner membrane. It carries out the reaction K(+)(in) + H(+)(in) = K(+)(out) + H(+)(out). In terms of biological role, transport of potassium into the cell. Likely operates as a K(+):H(+) symporter. The chain is Probable potassium transport system protein Kup 1 from Syntrophobacter fumaroxidans (strain DSM 10017 / MPOB).